We begin with the raw amino-acid sequence, 159 residues long: Regulatory protein RecX (159 aa).

Belongs to the RecX family.

It is found in the cytoplasm. In terms of biological role, modulates RecA activity. This is Regulatory protein RecX from Chlorobium limicola (strain DSM 245 / NBRC 103803 / 6330).